The sequence spans 727 residues: Epithelial splicing regulatory protein 2 (727 aa).

Residues 1 to 22 (MTPPPPPPPPPGPDPAADPAAD) are disordered. Ser-83 carries the post-translational modification Phosphoserine. RRM domains are found at residues 257–353 (TVVR…RFLS), 358–438 (VILR…RSTA), and 475–555 (DCVR…PCST). Ser-573 carries the post-translational modification Phosphoserine.

It belongs to the ESRP family. Interacts with RBPMS. In terms of tissue distribution, epithelial cell-specific.

It is found in the nucleus. Functionally, mRNA splicing factor that regulates the formation of epithelial cell-specific isoforms. Specifically regulates the expression of FGFR2-IIIb, an epithelial cell-specific isoform of FGFR2. Also regulates the splicing of CD44, CTNND1, ENAH, 3 transcripts that undergo changes in splicing during the epithelial-to-mesenchymal transition (EMT). Acts by directly binding specific sequences in mRNAs. Binds the GU-rich sequence motifs in the ISE/ISS-3, a cis-element regulatory region present in the mRNA of FGFR2. This is Epithelial splicing regulatory protein 2 (ESRP2) from Homo sapiens (Human).